Reading from the N-terminus, the 315-residue chain is tRNA dimethylallyltransferase (315 aa).

ATP is bound at residue 13–20; sequence GPTASGKS. 15-20 is a binding site for substrate; sequence TASGKS. Interaction with substrate tRNA regions lie at residues 38–41 and 162–166; these read DSMQ and QRLAR.

It belongs to the IPP transferase family. Monomer. Mg(2+) is required as a cofactor.

The catalysed reaction is adenosine(37) in tRNA + dimethylallyl diphosphate = N(6)-dimethylallyladenosine(37) in tRNA + diphosphate. Catalyzes the transfer of a dimethylallyl group onto the adenine at position 37 in tRNAs that read codons beginning with uridine, leading to the formation of N6-(dimethylallyl)adenosine (i(6)A). In Paramagnetospirillum magneticum (strain ATCC 700264 / AMB-1) (Magnetospirillum magneticum), this protein is tRNA dimethylallyltransferase.